The following is a 185-amino-acid chain: UPF0397 protein AYWB_013 (185 aa).

A run of 5 helical transmembrane segments spans residues 13-33, 42-62, 69-89, 109-129, and 148-168; these read IGLS…PVGF, AFLA…VGLI, FFLF…IGFI, IVYF…FFAP, and FLIV…LMTI.

This sequence belongs to the UPF0397 family.

The protein resides in the cell membrane. The protein is UPF0397 protein AYWB_013 of Aster yellows witches'-broom phytoplasma (strain AYWB).